We begin with the raw amino-acid sequence, 742 residues long: Enhancer of polycomb-like protein 1 (742 aa).

Positions 1–27 (MPTPSAQLDQGIISSNGGTSGVSASST) are enriched in polar residues. 3 disordered regions span residues 1–28 (MPTP…SSTR), 416–446 (RQQS…QCQQ), and 718–742 (KKLV…HQQA). Over residues 724 to 734 (QRQQQQQQQEQ) the composition is skewed to low complexity.

Belongs to the enhancer of polycomb family. Component of the NuA4 histone acetyltransferase complex.

It is found in the nucleus. In terms of biological role, component of the NuA4 histone acetyltransferase complex which is involved in transcriptional activation of selected genes principally by acetylation of nucleosomal histone H4 and H2A. The NuA4 complex is also involved in DNA repair. Involved in gene silencing by neighboring heterochromatin, blockage of the silencing spreading along the chromosome, and required for cell cycle progression through G2/M. In Eremothecium gossypii (strain ATCC 10895 / CBS 109.51 / FGSC 9923 / NRRL Y-1056) (Yeast), this protein is Enhancer of polycomb-like protein 1 (EPL1).